We begin with the raw amino-acid sequence, 146 residues long: uncharacterized protein (146 aa).

Residues Met-1–Glu-137 form the HTH marR-type domain.

This is an uncharacterized protein from Staphylococcus aureus (strain N315).